A 468-amino-acid polypeptide reads, in one-letter code: Cysteine--tRNA ligase (468 aa).

Residue C27 participates in Zn(2+) binding. Residues 29-39 (PTVYDDAHLGH) carry the 'HIGH' region motif. Residues C204, H234, and E238 each contribute to the Zn(2+) site. The 'KMSKS' region signature appears at 266–270 (KMSKS). An ATP-binding site is contributed by K269.

Belongs to the class-I aminoacyl-tRNA synthetase family. Monomer. Zn(2+) serves as cofactor.

It is found in the cytoplasm. The enzyme catalyses tRNA(Cys) + L-cysteine + ATP = L-cysteinyl-tRNA(Cys) + AMP + diphosphate. In Campylobacter hominis (strain ATCC BAA-381 / DSM 21671 / CCUG 45161 / LMG 19568 / NCTC 13146 / CH001A), this protein is Cysteine--tRNA ligase.